The sequence spans 330 residues: Phenylalanine--tRNA ligase alpha subunit (330 aa).

A Mg(2+)-binding site is contributed by Glu-255.

This sequence belongs to the class-II aminoacyl-tRNA synthetase family. Phe-tRNA synthetase alpha subunit type 1 subfamily. Tetramer of two alpha and two beta subunits. The cofactor is Mg(2+).

The protein localises to the cytoplasm. The enzyme catalyses tRNA(Phe) + L-phenylalanine + ATP = L-phenylalanyl-tRNA(Phe) + AMP + diphosphate + H(+). The chain is Phenylalanine--tRNA ligase alpha subunit from Acinetobacter baylyi (strain ATCC 33305 / BD413 / ADP1).